The chain runs to 213 residues: Dimethyl sulfoxide reductase transcriptional activator (213 aa).

Residues 155 to 206 (LTAKQREAALIAVHHGYYETPRRTELATLAEALGISKSALSQRLNAVEAKLA) enclose the HTH bat-type domain.

In terms of biological role, involved in activating dmsEABCD gene expression related to dimethyl sulfoxide (DMSO) reductase. Required for anaerobic respiration on dimethyl sulfoxide (DMSO). The protein is Dimethyl sulfoxide reductase transcriptional activator of Haloferax volcanii (strain ATCC 29605 / DSM 3757 / JCM 8879 / NBRC 14742 / NCIMB 2012 / VKM B-1768 / DS2) (Halobacterium volcanii).